A 426-amino-acid chain; its full sequence is Histidine--tRNA ligase (426 aa).

Belongs to the class-II aminoacyl-tRNA synthetase family. In terms of assembly, homodimer.

It localises to the cytoplasm. It catalyses the reaction tRNA(His) + L-histidine + ATP = L-histidyl-tRNA(His) + AMP + diphosphate + H(+). In Prochlorococcus marinus (strain AS9601), this protein is Histidine--tRNA ligase.